A 308-amino-acid chain; its full sequence is Baculoviral IAP repeat-containing protein bir-2 (308 aa).

BIR repeat units lie at residues 27-98 (RFAS…EFVM) and 170-241 (RLAT…DFIK). Positions 68, 71, 87, 94, 211, 214, 230, and 237 each coordinate Zn(2+).

Belongs to the IAP family.

The sequence is that of Baculoviral IAP repeat-containing protein bir-2 from Caenorhabditis elegans.